The following is a 528-amino-acid chain: Chaperonin GroEL, chloroplastic (528 aa).

ATP contacts are provided by residues 29–32 (TLGP), 86–90 (DGTTT), Gly414, 480–482 (DAA), and Asp496.

This sequence belongs to the chaperonin (HSP60) family. In terms of assembly, forms a cylinder of 14 subunits composed of two heptameric rings stacked back-to-back. Interacts with the co-chaperonin GroES.

Its subcellular location is the plastid. The protein resides in the chloroplast. The catalysed reaction is ATP + H2O + a folded polypeptide = ADP + phosphate + an unfolded polypeptide.. In terms of biological role, together with its co-chaperonin GroES, plays an essential role in assisting protein folding. The GroEL-GroES system forms a nano-cage that allows encapsulation of the non-native substrate proteins and provides a physical environment optimized to promote and accelerate protein folding. This is Chaperonin GroEL, chloroplastic from Pyropia yezoensis (Susabi-nori).